The sequence spans 123 residues: MLLASKAVFKYKIFPTGTITTFNLRPLLVSDINQNDGGMVLCSSAVSSINLPSILLIHSYISFMLTLCFFLSLSTILSEMINFISISGTYKFFINIIICYKHKSSAYCVYTIVYTIKKKSTLS.

The next 2 helical transmembrane spans lie at 55–77 (LLIH…STIL) and 92–114 (FFIN…TIVY).

Its subcellular location is the cell membrane. This is an uncharacterized protein from Pasteurella multocida (strain Pm70).